The primary structure comprises 563 residues: 4-hydroxy-7-methoxy-3-oxo-3,4-dihydro-2H-1,4-benzoxazin-2-yl glucoside beta-D-glucosidase 2, chloroplastic (563 aa).

A chloroplast-targeting transit peptide spans 1–51 (MAPLLAAAMNHAAHPVLRSHLGPNNESFSRHHLSSSPQSSKRRFNLSFTPR). Residues 17-43 (LRSHLGPNNESFSRHHLSSSPQSSKRR) form a disordered region. Residues Q89, H193, and 241–242 (NE) contribute to the a beta-D-glucoside site. The Proton donor role is filled by E242. The cysteines at positions 261 and 267 are disulfide-linked. Residues 322-358 (SFLDEQAKERSMDINLGWFLEPVVRGDYPFSMRSLAR) are dimerization. Y384 is a binding site for a beta-D-glucoside. 2 dimerization regions span residues 391–402 (HIDISPKYSPVL) and 447–450 (KYGN). A beta-D-glucoside-binding positions include E457, W508, 515-516 (EW), and Y524. E457 acts as the Nucleophile in catalysis.

Belongs to the glycosyl hydrolase 1 family. In terms of assembly, homo- and heterodimer. In terms of tissue distribution, expressed in leaves only starting at day 6 after germination.

It is found in the plastid. Its subcellular location is the chloroplast. The catalysed reaction is Hydrolysis of terminal, non-reducing beta-D-glucosyl residues with release of beta-D-glucose.. It catalyses the reaction DIMBOA beta-D-glucoside + H2O = DIMBOA + D-glucose. It carries out the reaction DIBOA beta-D-glucoside + H2O = DIBOA + D-glucose. Its function is as follows. Beta-glucosidase acting poorly on artificial aryl beta-glucosides. Has no activity toward the chromogenic substrate 6-bromo-2-naphthyl-beta-D-glucoside (6BNGlc). This is 4-hydroxy-7-methoxy-3-oxo-3,4-dihydro-2H-1,4-benzoxazin-2-yl glucoside beta-D-glucosidase 2, chloroplastic (GLU2) from Zea mays (Maize).